The following is a 79-amino-acid chain: Acyl carrier protein (79 aa).

One can recognise a Carrier domain in the interval 2–77 (SSIEERVKKI…QAVDYINKHL (76 aa)). Ser-37 carries the O-(pantetheine 4'-phosphoryl)serine modification.

This sequence belongs to the acyl carrier protein (ACP) family. Post-translationally, 4'-phosphopantetheine is transferred from CoA to a specific serine of apo-ACP by AcpS. This modification is essential for activity because fatty acids are bound in thioester linkage to the sulfhydryl of the prosthetic group.

It localises to the cytoplasm. The protein operates within lipid metabolism; fatty acid biosynthesis. In terms of biological role, carrier of the growing fatty acid chain in fatty acid biosynthesis. The polypeptide is Acyl carrier protein (Alkalilimnicola ehrlichii (strain ATCC BAA-1101 / DSM 17681 / MLHE-1)).